We begin with the raw amino-acid sequence, 351 residues long: ATP-dependent protease ATP-binding subunit-like protein (351 aa).

Residues 1–26 form a disordered region; it reads MPYITDMLRDRNSAATPPAEERSEPV. 79 to 86 serves as a coordination point for ATP; the sequence is GPTGVGKT.

It belongs to the ClpA/ClpB family.

This chain is ATP-dependent protease ATP-binding subunit-like protein, found in Rhodococcus erythropolis (Arthrobacter picolinophilus).